A 243-amino-acid chain; its full sequence is 7-cyano-7-deazaguanine synthase (243 aa).

9–19 is a binding site for ATP; it reads FSGGQDSTTCL. Positions 205, 220, 223, and 226 each coordinate Zn(2+).

It belongs to the QueC family. Zn(2+) is required as a cofactor.

The catalysed reaction is 7-carboxy-7-deazaguanine + NH4(+) + ATP = 7-cyano-7-deazaguanine + ADP + phosphate + H2O + H(+). It participates in purine metabolism; 7-cyano-7-deazaguanine biosynthesis. Catalyzes the ATP-dependent conversion of 7-carboxy-7-deazaguanine (CDG) to 7-cyano-7-deazaguanine (preQ(0)). In Albidiferax ferrireducens (strain ATCC BAA-621 / DSM 15236 / T118) (Rhodoferax ferrireducens), this protein is 7-cyano-7-deazaguanine synthase.